A 228-amino-acid polypeptide reads, in one-letter code: Flagellar L-ring protein (228 aa).

Residues 1–17 (MHYLRYFAIAFLLLLSS) form the signal peptide. The N-palmitoyl cysteine moiety is linked to residue Cys18. The S-diacylglycerol cysteine moiety is linked to residue Cys18.

Belongs to the FlgH family. The basal body constitutes a major portion of the flagellar organelle and consists of four rings (L,P,S, and M) mounted on a central rod.

The protein localises to the cell membrane. It is found in the bacterial flagellum basal body. Its function is as follows. Assembles around the rod to form the L-ring and probably protects the motor/basal body from shearing forces during rotation. The sequence is that of Flagellar L-ring protein from Wigglesworthia glossinidia brevipalpis.